A 444-amino-acid polypeptide reads, in one-letter code: D(2) dopamine receptor (444 aa).

Over 1 to 37 (MDPLNLSWYDDDLERQNWSRPFNGSEGKADRPHYNYY) the chain is Extracellular. Asn5, Asn17, and Asn23 each carry an N-linked (GlcNAc...) asparagine glycan. The helical transmembrane segment at 38-60 (AMLLTLLIFIIVFGNVLVCMAVS) threads the bilayer. Residues 61 to 70 (REKALQTTTN) are Cytoplasmic-facing. Residues 71–93 (YLIVSLAVADLLVATLVMPWVVY) traverse the membrane as a helical segment. Topologically, residues 94–108 (LEVVGEWKFSRIHCD) are extracellular. A disulfide bridge links Cys107 with Cys182. The chain crosses the membrane as a helical span at residues 109 to 130 (IFVTLDVMMCTASILNLCAISI). Residues 131-151 (DRYTAVAMPMLYNTRYSSKRR) are Cytoplasmic-facing. A helical membrane pass occupies residues 152-172 (VTVMIAIVWVLSFTISCPLLF). At 173–188 (GLNNTDQNECIIANPA) the chain is on the extracellular side. A helical membrane pass occupies residues 189–213 (FVVYSSIVSFYVPFIVTLLVYIKIY). The tract at residues 211 to 374 (KIYIVLRKRR…SQQKEKKATQ (164 aa)) is interaction with PPP1R9B. Residues 214 to 374 (IVLRKRRKRV…SQQKEKKATQ (161 aa)) are Cytoplasmic-facing. A disordered region spans residues 282–329 (EMLSSTSPPERTRYSPIPPSHHQLTLPDPSHHGLHSNPDSPAKPEKNG). The helical transmembrane segment at 375–396 (MLAIVLGVFIICWLPFFITHIL) threads the bilayer. The Extracellular portion of the chain corresponds to 397-410 (NIHCDCNIPPVLYS). A disulfide bond links Cys400 and Cys402. Residues 411–432 (AFTWLGYVNSAVNPIIYTTFNI) form a helical membrane-spanning segment. Residues 433-444 (EFRKAFMKILHC) lie on the Cytoplasmic side of the membrane. Cys444 carries the S-palmitoyl cysteine lipid modification.

It belongs to the G-protein coupled receptor 1 family. Forms homo- and heterooligomers with DRD4. The interaction with DRD4 may modulate agonist-induced downstream signaling. Interacts with CADPS and CADPS2. Interacts with GPRASP1, PPP1R9B and CLIC6. Interacts with ARRB2. Interacts with HTR2A. Interacts with DRD1. Interacts with KCNA2. In terms of processing, palmitoylated. Palmitoylation which is required for proper localization to the plasma membrane and stability of the receptor could be carried on by ZDHHC4, ZDHHC3 and ZDHHC8. As to expression, expressed in the anterior lobe of the pituitary gland. Expressed ventral tegmental area of the midbrain and the pars compacta of the substantia nigra. Expressed seven times more than isoform short in the caudate nucleus. In terms of tissue distribution, expressed in the anterior lobe of the pituitary gland. Expressed in the caudate nucleus. Not expressed in the wider brain.

Its subcellular location is the cell membrane. It localises to the golgi apparatus membrane. In terms of biological role, dopamine receptor whose activity is mediated by G proteins which inhibit adenylyl cyclase. Positively regulates postnatal regression of retinal hyaloid vessels via suppression of VEGFR2/KDR activity, downstream of OPN5. This chain is D(2) dopamine receptor (Drd2), found in Rattus norvegicus (Rat).